A 43-amino-acid chain; its full sequence is DRDSCVDKSKCAKYGYYYQCDECCKKAGDRAGTCEYFKCKCNP.

Disulfide bonds link Cys-5–Cys-23, Cys-11–Cys-34, Cys-20–Cys-39, and Cys-24–Cys-41.

The protein belongs to the ergtoxin family. Gamma-KTx 4 subfamily. Expressed by the venom gland.

The protein localises to the secreted. Its function is as follows. Reversibly blocks Kv11/ERG potassium channels. In Centruroides exilicauda (Bark scorpion), this protein is Potassium channel toxin gamma-KTx 4.4.